A 296-amino-acid chain; its full sequence is Glycine N-acyltransferase-like protein (296 aa).

Lysine 41 is modified (N6-acetyllysine; alternate). Lysine 41 is subject to N6-succinyllysine; alternate. At lysine 43 the chain carries N6-acetyllysine. Lysine 48 is subject to N6-acetyllysine; alternate. Lysine 48 carries the post-translational modification N6-succinyllysine; alternate. 2 positions are modified to N6-acetyllysine: lysine 80 and lysine 83. N6-acetyllysine; alternate occurs at positions 183 and 256. N6-succinyllysine; alternate is present on residues lysine 183 and lysine 256.

It belongs to the glycine N-acyltransferase family.

It localises to the mitochondrion. The enzyme catalyses an acyl-CoA + glycine = an N-acylglycine + CoA + H(+). Functionally, mitochondrial acyltransferase which transfers the acyl group to the N-terminus of glycine. Can conjugate a multitude of substrates to form a variety of N-acylglycines. The protein is Glycine N-acyltransferase-like protein (Gm4952) of Mus musculus (Mouse).